A 256-amino-acid polypeptide reads, in one-letter code: DNA repair protein RecO (256 aa).

Belongs to the RecO family.

In terms of biological role, involved in DNA repair and RecF pathway recombination. The protein is DNA repair protein RecO of Streptococcus equi subsp. zooepidemicus (strain MGCS10565).